We begin with the raw amino-acid sequence, 358 residues long: Fructose-bisphosphate aldolase 2, cytoplasmic (358 aa).

Arg39 contacts substrate. Catalysis depends on Glu183, which acts as the Proton acceptor. Lys225 (schiff-base intermediate with dihydroxyacetone-P) is an active-site residue. Substrate is bound by residues 266 to 268 (SGG) and Arg298.

Belongs to the class I fructose-bisphosphate aldolase family. In terms of assembly, homotetramer.

It is found in the cytoplasm. It localises to the cytosol. It catalyses the reaction beta-D-fructose 1,6-bisphosphate = D-glyceraldehyde 3-phosphate + dihydroxyacetone phosphate. Its pathway is carbohydrate degradation; glycolysis; D-glyceraldehyde 3-phosphate and glycerone phosphate from D-glucose: step 4/4. Fructose-bisphosphate aldolase that plays a key role in glycolysis and gluconeogenesis. In Oryza sativa subsp. japonica (Rice), this protein is Fructose-bisphosphate aldolase 2, cytoplasmic.